A 108-amino-acid chain; its full sequence is Ig kappa chain V-V region HP 124E1 (108 aa).

Residues 1–23 (DIQMTQTTSSLSASLGDRVTISC) are framework-1. A disulfide bridge links Cys23 with Cys88. A complementarity-determining-1 region spans residues 24–34 (RASQDINNYLN). The interval 35 to 49 (WYQQKPDGTVKLLIY) is framework-2. The tract at residues 50-56 (YTSRLHS) is complementarity-determining-2. The framework-3 stretch occupies residues 57-88 (GVPSRFSGSGSGTDYSLTISNLEQEDIATYFC). A complementarity-determining-3 region spans residues 89 to 97 (QQGKTLPRT). A framework-4 region spans residues 98–108 (FGGGTKLEIKR).

This chain is Ig kappa chain V-V region HP 124E1, found in Mus musculus (Mouse).